Here is a 498-residue protein sequence, read N- to C-terminus: Hexokinase-1 (498 aa).

Positions 39–492 (AAAQRVVAEL…SGLGAALVAA (454 aa)) constitute a Hexokinase domain. Positions 95–233 (TGGEEGSYYA…GLDMRVSALI (139 aa)) are hexokinase small subdomain. 3 residues coordinate ADP: Gly-109, Thr-110, and Asn-111. 4 residues coordinate D-glucose: Thr-199, Lys-200, Asn-234, and Asp-235. Positions 234-481 (NDTVGTLAAG…ERVVVKLASD (248 aa)) are hexokinase large subdomain. Position 258 (Thr-258) interacts with ADP. 3 residues coordinate D-glucose: Asn-261, Glu-290, and Glu-321. Gly-446 lines the ADP pocket.

This sequence belongs to the hexokinase family. Highly expressed in senescent leaves.

The enzyme catalyses a D-hexose + ATP = a D-hexose 6-phosphate + ADP + H(+). The catalysed reaction is D-fructose + ATP = D-fructose 6-phosphate + ADP + H(+). It catalyses the reaction D-glucose + ATP = D-glucose 6-phosphate + ADP + H(+). It functions in the pathway carbohydrate metabolism; hexose metabolism. The protein operates within carbohydrate degradation; glycolysis; D-glyceraldehyde 3-phosphate and glycerone phosphate from D-glucose: step 1/4. Fructose and glucose phosphorylating enzyme. Acts as a positive regulator of leaf senescence by mediating glucose accumulation and inducing an increase in reactive oxygen species (ROS). In Oryza sativa subsp. japonica (Rice), this protein is Hexokinase-1 (HXK1).